Consider the following 302-residue polypeptide: 4-diphosphocytidyl-2-C-methyl-D-erythritol kinase (302 aa).

Lys20 is a catalytic residue. Position 106-116 (106-116 (PVASGVGGGSG)) interacts with ATP. Asp148 is an active-site residue.

The protein belongs to the GHMP kinase family. IspE subfamily.

The catalysed reaction is 4-CDP-2-C-methyl-D-erythritol + ATP = 4-CDP-2-C-methyl-D-erythritol 2-phosphate + ADP + H(+). The protein operates within isoprenoid biosynthesis; isopentenyl diphosphate biosynthesis via DXP pathway; isopentenyl diphosphate from 1-deoxy-D-xylulose 5-phosphate: step 3/6. Catalyzes the phosphorylation of the position 2 hydroxy group of 4-diphosphocytidyl-2C-methyl-D-erythritol. This is 4-diphosphocytidyl-2-C-methyl-D-erythritol kinase from Bartonella henselae (strain ATCC 49882 / DSM 28221 / CCUG 30454 / Houston 1) (Rochalimaea henselae).